A 314-amino-acid chain; its full sequence is DNA-directed RNA polymerase subunit alpha (314 aa).

The interval 1–227 is alpha N-terminal domain (alpha-NTD); that stretch reads MTKFEIECVE…ELLHPLKEIN (227 aa). Residues 241-314 are alpha C-terminal domain (alpha-CTD); that stretch reads KINQILIEEL…LPKEKTVKPN (74 aa).

This sequence belongs to the RNA polymerase alpha chain family. In plastids the minimal PEP RNA polymerase catalytic core is composed of four subunits: alpha, beta, beta', and beta''. When a (nuclear-encoded) sigma factor is associated with the core the holoenzyme is formed, which can initiate transcription.

The protein resides in the plastid. The protein localises to the chloroplast. The catalysed reaction is RNA(n) + a ribonucleoside 5'-triphosphate = RNA(n+1) + diphosphate. In terms of biological role, DNA-dependent RNA polymerase catalyzes the transcription of DNA into RNA using the four ribonucleoside triphosphates as substrates. The chain is DNA-directed RNA polymerase subunit alpha from Rhodomonas salina (Cryptomonas salina).